The following is a 323-amino-acid chain: uncharacterized protein (323 aa).

Positions 1–142 constitute a TIR domain; sequence MPSVFFSYSH…QVAKAVREAA (142 aa).

This is an uncharacterized protein from Sinorhizobium fredii (strain NBRC 101917 / NGR234).